Here is a 307-residue protein sequence, read N- to C-terminus: Taste receptor type 2 member 41 (307 aa).

Over 1–7 (MQAALTA) the chain is Extracellular. Residues 8–28 (FFMLLFSLLSLLGIAANGFIV) form a helical membrane-spanning segment. The Cytoplasmic portion of the chain corresponds to 29-40 (LVLGREWLRYGR). Residues 41–61 (LLPLDMILISLGASRFCLQLV) form a helical membrane-spanning segment. The Extracellular portion of the chain corresponds to 62–88 (GTVHNFYYSAQKVEYSGGLGRQFFHLH). The helical transmembrane segment at 89–109 (WHFLNSATFWFCSWLSVLFCV) threads the bilayer. Residues 110-129 (KIANITHPTFLWLKWRFPAW) lie on the Cytoplasmic side of the membrane. A helical membrane pass occupies residues 130–150 (VPWLLLGSVLISFIITLLFFW). Topologically, residues 151 to 183 (VNYPAYQEFLIRKFSVNMTYKWNTRIETYYFPS) are extracellular. Residue Asn167 is glycosylated (N-linked (GlcNAc...) asparagine). Residues 184-204 (LKLVIWSIPFSVFLVSIMLLI) traverse the membrane as a helical segment. Topologically, residues 205–234 (NSLRRHTQRMQHNGHSLQDPSTQAHTRALK) are cytoplasmic. Residues 235–255 (SLISFLILYALSFLSLIIDAT) traverse the membrane as a helical segment. At 256–264 (KFISMQNDF) the chain is on the extracellular side. The helical transmembrane segment at 265 to 285 (YWPWQIAVYLCISIHPFILIF) threads the bilayer. The Cytoplasmic portion of the chain corresponds to 286–307 (SNLKLRSVFSQLLLLARGFWVA).

It belongs to the G-protein coupled receptor T2R family.

Its subcellular location is the membrane. Receptor that may play a role in the perception of bitterness and is gustducin-linked. May play a role in sensing the chemical composition of the gastrointestinal content. The activity of this receptor may stimulate alpha gustducin, mediate PLC-beta-2 activation and lead to the gating of TRPM5. In Pan paniscus (Pygmy chimpanzee), this protein is Taste receptor type 2 member 41 (TAS2R41).